The following is a 1065-amino-acid chain: WD repeat-containing protein on Y chromosome (1065 aa).

WD repeat units lie at residues 153-197, 326-365, 369-408, 459-498, 511-550, 598-638, 745-784, and 828-867; these read EEVT…IRTA, RVPL…EPSA, GHNG…LLQT, THAA…RKII, IIDI…VVRN, FHTD…RRYS, KTGD…VPEA, and AHLK…LGTL. Basic and acidic residues predominate over residues 915–925; it reads PAKRAEVKAPE. 2 disordered regions span residues 915 to 936 and 1024 to 1065; these read PAKR…QTDD and GSAL…QQSE. Residues 926–936 are compositionally biased toward acidic residues; sequence DRDEETAQTDD.

This is WD repeat-containing protein on Y chromosome from Drosophila persimilis (Fruit fly).